Reading from the N-terminus, the 133-residue chain is Small ribosomal subunit protein uS8 (133 aa).

The protein belongs to the universal ribosomal protein uS8 family. Part of the 30S ribosomal subunit. Contacts proteins S5 and S12.

In terms of biological role, one of the primary rRNA binding proteins, it binds directly to 16S rRNA central domain where it helps coordinate assembly of the platform of the 30S subunit. This is Small ribosomal subunit protein uS8 from Prochlorococcus marinus (strain MIT 9515).